The sequence spans 587 residues: Branchpoint-bridging protein (587 aa).

Over residues 1 to 16 the composition is skewed to polar residues; that stretch reads MLNSRSVGSTGSNNTP. Disordered stretches follow at residues 1 to 64 and 121 to 142; these read MLNS…DGRG and GDVV…DNHG. Residues 44–64 show a composition bias toward basic and acidic residues; sequence DSYKSNSRMDHRPDGYHDGRG. A phosphoserine mark is found at serine 131 and serine 133. In terms of domain architecture, KH spans 191 to 271; it reads YVPVKDYPEI…DKINHAIKLI (81 aa). 2 CCHC-type zinc fingers span residues 309–326 and 334–351; these read QVCQ…DCPE and IVCR…DCPV. 2 disordered regions span residues 375–490 and 551–587; these read GGGS…PGTS and IPGA…YSNR. The span at 379–399 shows a compositional bias: polar residues; it reads AISNGNGEPQKSIEFSESGAA. A compositionally biased stretch (low complexity) spans 410 to 454; that stretch reads AAASTSVSSSTSSPAPWAKPASSAAPSNPAPWQQPAAPQSAPALS. Polar residues-rich tracts occupy residues 465–483 and 563–573; these read QPTQ…SQNA and SYNTSESSNLN.

The protein belongs to the BBP/SF1 family. U2AF large subunit (u2af59), U2AF small subunit (u2af23) and bpb1 interact to form a complex required for complex A formation.

Its subcellular location is the cytoplasm. It localises to the nucleus. Functionally, necessary for the splicing of pre-mRNA. The BPB1(SF1)-u2af59-u2af23 complex has a role in the recognition of the branch site (5'-UACUAAC-3'), the pyrimidine tract and the 3'-splice site at the 3'-end of introns. This Schizosaccharomyces pombe (strain 972 / ATCC 24843) (Fission yeast) protein is Branchpoint-bridging protein (bpb1).